A 314-amino-acid chain; its full sequence is E3 ubiquitin-protein ligase CHIP (314 aa).

The span at 1 to 11 (MKGKEEREREG) shows a compositional bias: basic and acidic residues. A disordered region spans residues 1–47 (MKGKEEREREGGGGAVGPGAAGPGAGGGSPEKSHSAQEHKEQGNRLF). Gly residues predominate over residues 12 to 29 (GGGAVGPGAAGPGAGGGS). Residues 31-43 (EKSHSAQEHKEQG) show a composition bias toward basic and acidic residues. TPR repeat units lie at residues 36–69 (AQEH…NPLV), 70–103 (AVYY…DGQS), and 105–137 (KAHF…AKEQ). Residues 237–311 (DIPDYLCGKI…DAFISENGWV (75 aa)) enclose the U-box domain.

In terms of assembly, homodimer.

Its subcellular location is the cytoplasm. It localises to the nucleus. The protein resides in the mitochondrion. The enzyme catalyses S-ubiquitinyl-[E2 ubiquitin-conjugating enzyme]-L-cysteine + [acceptor protein]-L-lysine = [E2 ubiquitin-conjugating enzyme]-L-cysteine + N(6)-ubiquitinyl-[acceptor protein]-L-lysine.. In terms of biological role, E3 ubiquitin-protein ligase which targets misfolded chaperone substrates towards proteasomal degradation. Collaborates with ATXN3 in the degradation of misfolded chaperone substrates: ATXN3 restricting the length of ubiquitin chain attached to STUB1/CHIP substrates and preventing further chain extension. This chain is E3 ubiquitin-protein ligase CHIP, found in Gallus gallus (Chicken).